Reading from the N-terminus, the 83-residue chain is Translational regulator CsrA (83 aa).

The protein belongs to the CsrA/RsmA family. Homodimer; the beta-strands of each monomer intercalate to form a hydrophobic core, while the alpha-helices form wings that extend away from the core.

Its subcellular location is the cytoplasm. A translational regulator that binds mRNA to regulate translation initiation and/or mRNA stability. Usually binds in the 5'-UTR at or near the Shine-Dalgarno sequence preventing ribosome-binding, thus repressing translation. Its main target seems to be the major flagellin gene, while its function is anatagonized by FliW. The polypeptide is Translational regulator CsrA (Thermotoga petrophila (strain ATCC BAA-488 / DSM 13995 / JCM 10881 / RKU-1)).